Reading from the N-terminus, the 784-residue chain is ATP-dependent 6-phosphofructokinase, platelet type (784 aa).

The residue at position 1 (M1) is an N-acetylmethionine. The tract at residues 1–398 is N-terminal catalytic PFK domain 1; sequence MSDLDSSSSS…NLNTYKRLAI (398 aa). Phosphoserine occurs at positions 2, 6, and 20. ATP contacts are provided by residues G33, 96-97, and 126-129; these read RC and GDGS. D127 serves as a coordination point for Mg(2+). The residue at position 141 (S141) is a Phosphoserine. Substrate contacts are provided by residues 172–174, R209, 216–218, E272, R300, and 306–309; these read SID, MGR, and HVQR. Residue D174 is the Proton acceptor of the active site. N6-acetyllysine is present on K394. The tract at residues 399–410 is interdomain linker; that stretch reads KLPDEKIVKSNC. The tract at residues 411–784 is C-terminal regulatory PFK domain 2; that stretch reads NVAVINVGAP…LESLQHHEEL (374 aa). Residue R480 participates in beta-D-fructose 2,6-bisphosphate binding. Position 485 is an N6-acetyllysine (K485). Beta-D-fructose 2,6-bisphosphate is bound by residues 537–541, R575, 582–584, and E638; these read TVSNN and MGG. Residue S539 is glycosylated (O-linked (GlcNAc) serine). Y650 carries the phosphotyrosine modification. Residues R664 and 670–673 contribute to the beta-D-fructose 2,6-bisphosphate site; that span reads HMQQ. At K687 the chain carries N6-acetyllysine. Position 743 (R743) interacts with beta-D-fructose 2,6-bisphosphate.

The protein belongs to the phosphofructokinase type A (PFKA) family. ATP-dependent PFK group I subfamily. Eukaryotic two domain clade 'E' sub-subfamily. Homo- and heterotetramers. Phosphofructokinase (PFK) enzyme functions as a tetramer composed of different combinations of 3 types of subunits, called PFKM (M), PFKL (L) and PFKP (P). The composition of the PFK tetramer differs according to the tissue type it is present in. The kinetic and regulatory properties of the tetrameric enzyme are dependent on the subunit composition, hence can vary across tissues. Interacts with ATG4B; promoting phosphorylation of ATG4B. Mg(2+) is required as a cofactor. Post-translationally, glcNAcylation decreases enzyme activity. In terms of tissue distribution, expression is constant during tumor growth and markedly decreases when cell proliferation stops.

It is found in the cytoplasm. It carries out the reaction beta-D-fructose 6-phosphate + ATP = beta-D-fructose 1,6-bisphosphate + ADP + H(+). The protein operates within carbohydrate degradation; glycolysis; D-glyceraldehyde 3-phosphate and glycerone phosphate from D-glucose: step 3/4. Its activity is regulated as follows. Allosterically activated by ADP, AMP, or fructose 2,6-bisphosphate, and allosterically inhibited by ATP or citrate. Catalyzes the phosphorylation of D-fructose 6-phosphate to fructose 1,6-bisphosphate by ATP, the first committing step of glycolysis. The protein is ATP-dependent 6-phosphofructokinase, platelet type (Pfkp) of Mus musculus (Mouse).